The chain runs to 674 residues: Inactivation-no-after-potential D protein (674 aa).

The PDZ 1 domain occupies 17-106 (MVTLDKTGKK…KIELEIQTFD (90 aa)). Residues 133-192 (QTTNNNASGGQGMGQGQGQGQGMAGMNRQQSMQKRNTTFTASMRQKHSNYADEDDEDTRD) are disordered. Residues 141–155 (GGQGMGQGQGQGQGM) are compositionally biased toward gly residues. Residues 159–175 (NRQQSMQKRNTTFTASM) show a composition bias toward polar residues. 2 PDZ domains span residues 249 to 332 (RIEV…TSRR) and 364 to 448 (ARTV…LTLK). Basic and acidic residues predominate over residues 458–475 (AAEEKKKEEAKKEEEKPQ). A disordered region spans residues 458-481 (AAEEKKKEEAKKEEEKPQEPATAE). PDZ domains follow at residues 489 to 577 (LIEL…RADP) and 584 to 664 (NVDL…TRPK). A phosphoserine mark is found at S598 and S600.

As to quaternary structure, interacts with the C-terminus of trp, and with norpA and inaC to form the inaD signaling complex. Interacts with Fkbp59, which together with trpl, rhodopsin and calmodulin may also be part of the inaD complex. Post-translationally, phosphorylated by inaC. As to expression, expressed in photoreceptor cells (R cells) of the compound eyes and ocelli.

Its subcellular location is the cell projection. It localises to the rhabdomere. Its function is as follows. Involved in the negative feedback regulation of the light-activated signaling cascade in photoreceptors through a calcium-mediated process. Interacts with tetrapeptide ligand located in C-terminal sequence of 3 key components of the visual cascade, tethering them and forming a macromolecular signaling phototransduction complex. The sequence is that of Inactivation-no-after-potential D protein (inaD) from Drosophila melanogaster (Fruit fly).